The following is a 111-amino-acid chain: WAP four-disulfide core domain protein 12 (111 aa).

A signal peptide spans 1–23; it reads MGSSSFLVLMVSLTLVTLVAVEG. Positions 27–74 constitute a WAP domain; sequence DIEKAGVCPADNVRCFKSDPPQCHTDQDCLGERKCCYLHCGFKCVIPV. Disulfide bonds link C34–C62, C41–C66, C49–C61, and C55–C70. The interval 80 to 111 is disordered; it reads GGNKDEDVSRPYPEPGWEAKCPGSSSTRCPQK. Positions 102 to 111 are enriched in polar residues; it reads GSSSTRCPQK.

It is found in the secreted. Antibacterial protein. Putative acid-stable proteinase inhibitor. The polypeptide is WAP four-disulfide core domain protein 12 (WFDC12) (Pan troglodytes (Chimpanzee)).